Consider the following 232-residue polypeptide: Rho-related GTP-binding protein Rho6 (232 aa).

Residues 23-28 (QCGKTA), 38-45 (YPETYVPT), 67-71 (DTSGS), 125-128 (CKTD), and 169-170 (AF) each bind GTP. The short motif at 42 to 50 (YVPTVFENY) is the Effector region element. A Cysteine methyl ester modification is found at Cys229. A lipid anchor (S-geranylgeranyl cysteine) is attached at Cys229. Residues 230–232 (SIM) constitute a propeptide, removed in mature form.

It belongs to the small GTPase superfamily. Rho family. In terms of assembly, binds GRB7 and PLXNB1. Interacts with PLXNA2. Interacts with UBXD5.

It is found in the cell membrane. The protein localises to the cytoplasm. Its subcellular location is the cytoskeleton. Functionally, lacks intrinsic GTPase activity. Has a low affinity for GDP, and constitutively binds GTP. Controls rearrangements of the actin cytoskeleton. Induces the Rac-dependent neuritic process formation in part by disruption of the cortical actin filaments. Causes the formation of many neuritic processes from the cell body with disruption of the cortical actin filaments. In Mus musculus (Mouse), this protein is Rho-related GTP-binding protein Rho6 (Rnd1).